The following is an 844-amino-acid chain: Lysine-specific histone demethylase 1 homolog 1 (844 aa).

The span at 1–18 shows a compositional bias: basic and acidic residues; it reads MSTETKETRPETKPEDLG. The segment at 1–131 is disordered; sequence MSTETKETRP…PGPRARKRRR (131 aa). A compositionally biased stretch (acidic residues) spans 26 to 40; it reads PGEEPLGELIADDVN. Composition is skewed to polar residues over residues 46–62 and 107–118; these read ASAT…QSEQ and DLVTEQQSQNPN. The 102-residue stretch at 154–255 folds into the SWIRM domain; that stretch reads GKEVDSEALI…FGLAPVIKEA (102 aa). Glu-295, Arg-297, and Arg-303 together coordinate FAD. The Nuclear localization signal signature appears at 516 to 523; the sequence is LKKGSIEF. Glu-679 is a binding site for FAD.

It belongs to the flavin monoamine oxidase family. In terms of assembly, interacts with CZS. Interacts with OTU6/OTLD1. Requires FAD as cofactor. Expressed in the shoot and root apical regions of young seedlings. Expressed in cotyledons and inflorescences.

It localises to the nucleus. It is found in the cytoplasm. Functionally, probable histone demethylase that reduces the levels of histone H3 'Lys-4' methylation in chromatin of the floral repressor FLOWERING LOCUS C (FLC) and the sporophytically silenced floral repressor FWA. Seems to act in partial redundancy with FLOWERING LOCUS D (FLD) to repress FLC expression. Required for cytosine methylation of FWA. Controls primary seed dormancy by regulating DOG1 and abscisic acid signaling-related genes. In association with OTU6/OTLD1, involved in transcriptional gene repression via histone deubiquitination and demethylation. The sequence is that of Lysine-specific histone demethylase 1 homolog 1 from Arabidopsis thaliana (Mouse-ear cress).